Consider the following 148-residue polypeptide: Ubiquitin-conjugating enzyme E2 4 (148 aa).

A disordered region spans residues 1-22 (MSSSKRIAKELSDLERDPPTSC). Positions 2–148 (SSSKRIAKEL…AREWTKKYAV (147 aa)) constitute a UBC core domain. Residues 7 to 18 (IAKELSDLERDP) show a composition bias toward basic and acidic residues. Residue Ser12 is modified to Phosphoserine. The active-site Glycyl thioester intermediate is the Cys86. Lys91 participates in a covalent cross-link: Glycyl lysine isopeptide (Lys-Gly) (interchain with G-Cter in ubiquitin).

It belongs to the ubiquitin-conjugating enzyme family. In terms of assembly, interacts with TUL1. Post-translationally, the N-terminus is blocked.

It carries out the reaction S-ubiquitinyl-[E1 ubiquitin-activating enzyme]-L-cysteine + [E2 ubiquitin-conjugating enzyme]-L-cysteine = [E1 ubiquitin-activating enzyme]-L-cysteine + S-ubiquitinyl-[E2 ubiquitin-conjugating enzyme]-L-cysteine.. It participates in protein modification; protein ubiquitination. Functionally, E2 ubiquitin-conjugating enzyme that catalyzes the covalent attachment of ubiquitin to other proteins. Mediates the selective degradation of short-lived and abnormal proteins. Mediates ubiquitination of PEX5. In Saccharomyces cerevisiae (strain ATCC 204508 / S288c) (Baker's yeast), this protein is Ubiquitin-conjugating enzyme E2 4.